The sequence spans 198 residues: Protein GrpE (198 aa).

The protein belongs to the GrpE family. In terms of assembly, homodimer.

It is found in the cytoplasm. Functionally, participates actively in the response to hyperosmotic and heat shock by preventing the aggregation of stress-denatured proteins, in association with DnaK and GrpE. It is the nucleotide exchange factor for DnaK and may function as a thermosensor. Unfolded proteins bind initially to DnaJ; upon interaction with the DnaJ-bound protein, DnaK hydrolyzes its bound ATP, resulting in the formation of a stable complex. GrpE releases ADP from DnaK; ATP binding to DnaK triggers the release of the substrate protein, thus completing the reaction cycle. Several rounds of ATP-dependent interactions between DnaJ, DnaK and GrpE are required for fully efficient folding. In Baumannia cicadellinicola subsp. Homalodisca coagulata, this protein is Protein GrpE.